A 357-amino-acid polypeptide reads, in one-letter code: RNA 3'-terminal phosphate cyclase (357 aa).

Residues Q102 and 293–296 (HMGD) contribute to the ATP site. Residue H319 is the Tele-AMP-histidine intermediate of the active site.

It belongs to the RNA 3'-terminal cyclase family. Type 1 subfamily.

It is found in the cytoplasm. The catalysed reaction is a 3'-end 3'-phospho-ribonucleotide-RNA + ATP = a 3'-end 2',3'-cyclophospho-ribonucleotide-RNA + AMP + diphosphate. Catalyzes the conversion of 3'-phosphate to a 2',3'-cyclic phosphodiester at the end of RNA. The mechanism of action of the enzyme occurs in 3 steps: (A) adenylation of the enzyme by ATP; (B) transfer of adenylate to an RNA-N3'P to produce RNA-N3'PP5'A; (C) and attack of the adjacent 2'-hydroxyl on the 3'-phosphorus in the diester linkage to produce the cyclic end product. The biological role of this enzyme is unknown but it is likely to function in some aspects of cellular RNA processing. The chain is RNA 3'-terminal phosphate cyclase from Desulfurococcus amylolyticus (strain DSM 18924 / JCM 16383 / VKM B-2413 / 1221n) (Desulfurococcus kamchatkensis).